A 521-amino-acid chain; its full sequence is Cell cycle checkpoint protein hpr-9 (521 aa).

Disordered regions lie at residues Met1 to Arg20, Gln318 to Val375, and Gly492 to Arg521. 2 stretches are compositionally biased toward polar residues: residues Glu355–Ser370 and Thr493–Gln504.

The protein belongs to the rad9 family. Putative component of the toroidal 9-1-1 (RAD9-RAD1-HUS1) complex, composed of hpr-9, mrt-2 and hus-1.

In terms of biological role, may be a component of the 9-1-1 cell-cycle checkpoint response complex that plays a major role in DNA repair. This is Cell cycle checkpoint protein hpr-9 from Caenorhabditis elegans.